Consider the following 577-residue polypeptide: Arginine--tRNA ligase (577 aa).

The 'HIGH' region signature appears at 122–132; the sequence is PNVAKEMHVGH.

The protein belongs to the class-I aminoacyl-tRNA synthetase family. As to quaternary structure, monomer.

The protein resides in the cytoplasm. The enzyme catalyses tRNA(Arg) + L-arginine + ATP = L-arginyl-tRNA(Arg) + AMP + diphosphate. The protein is Arginine--tRNA ligase of Escherichia coli O127:H6 (strain E2348/69 / EPEC).